A 229-amino-acid chain; its full sequence is Endonuclease V (229 aa).

The Mg(2+) site is built by Asp43 and Asp111.

It belongs to the endonuclease V family. The cofactor is Mg(2+).

The protein resides in the cytoplasm. It carries out the reaction Endonucleolytic cleavage at apurinic or apyrimidinic sites to products with a 5'-phosphate.. In terms of biological role, DNA repair enzyme involved in the repair of deaminated bases. Selectively cleaves double-stranded DNA at the second phosphodiester bond 3' to a deoxyinosine leaving behind the intact lesion on the nicked DNA. The polypeptide is Endonuclease V (Rippkaea orientalis (strain PCC 8801 / RF-1) (Cyanothece sp. (strain PCC 8801))).